The sequence spans 538 residues: Chaperonin GroEL (538 aa).

Residues 29 to 32, 86 to 90, G413, 477 to 479, and D493 contribute to the ATP site; these read TLGP, DGTTT, and NAA.

The protein belongs to the chaperonin (HSP60) family. As to quaternary structure, forms a cylinder of 14 subunits composed of two heptameric rings stacked back-to-back. Interacts with the co-chaperonin GroES.

It is found in the cytoplasm. The catalysed reaction is ATP + H2O + a folded polypeptide = ADP + phosphate + an unfolded polypeptide.. Functionally, together with its co-chaperonin GroES, plays an essential role in assisting protein folding. The GroEL-GroES system forms a nano-cage that allows encapsulation of the non-native substrate proteins and provides a physical environment optimized to promote and accelerate protein folding. This Bifidobacterium adolescentis (strain ATCC 15703 / DSM 20083 / NCTC 11814 / E194a) protein is Chaperonin GroEL.